The chain runs to 330 residues: Inactive hydroxysteroid dehydrogenase-like protein 1 (330 aa).

Residue alanine 2 is modified to N-acetylalanine. A required for mitochondria translocation region spans residues 2-82; that stretch reads AAVDSFYLLY…SGATDGIGKA (81 aa). Residues 74–80, aspartate 125, and lysine 222 contribute to the NADP(+) site; that span reads GATDGIG.

It belongs to the short-chain dehydrogenases/reductases (SDR) family. 17-beta-HSD 3 subfamily. As to quaternary structure, interacts with STYXL1. As to expression, highly expressed in testis and ovary. Also detected in thyroid, spinal cord, adrenal gland, heart, placenta, skeletal muscle, small intestine, colon, spleen, prostate and pancreas.

The protein localises to the mitochondrion. The chain is Inactive hydroxysteroid dehydrogenase-like protein 1 (HSDL1) from Homo sapiens (Human).